The sequence spans 345 residues: Polyprenyl transferase dpmpC (345 aa).

8 consecutive transmembrane segments (helical) span residues 24–44, 60–80, 101–121, 183–203, 220–240, 261–281, 286–306, and 319–339; these read PVFASFAGLWSTLLAGAARLA, GLCFLAAYIFYGAGTVWNDWV, VTTFQAMLWMVLQTLATWYLL, LYVYPQYILGFIVAWPAVIGW, CLPLCSMVYFWIIYLNTAYSY, HLHLLLVALASPVPVCMLLFL, SFWLWATWLGGWTASFAEQLI, and LHKSNFMLGIWTIFACAVELL.

The protein belongs to the UbiA prenyltransferase family. It depends on Mg(2+) as a cofactor.

It localises to the membrane. It participates in secondary metabolite biosynthesis; terpenoid biosynthesis. Functionally, polyprenyl transferase; part of the gene cluster that mediates the biosynthesis of diterpenoid pyrones. The first step of the pathway is the synthesis of the alpha-pyrone moiety by the polyketide synthase dpmpA via condensation of one acetyl-CoA starter unit with 3 malonyl-CoA units and 2 methylations. The alpha-pyrone is then combined with geranylgeranyl pyrophosphate (GGPP) formed by the GGPP synthase dpmpD through the action of the prenyltransferase dpmpC to yield a linear alpha-pyrone diterpenoid. Subsequent steps in the diterpenoid pyrone biosynthetic pathway involve the decalin core formation, which is initiated by the epoxidation of the C10-C11 olefin by the FAD-dependent oxidoreductase dpmpE, and is followed by a cyclization cascade catalyzed by the terpene cyclase dpmpB. The short chain dehydrogenase/reductase dpmpG then oxidizes the 8S hydroxy group to a ketone and the short chain dehydrogenase/reductase dpmpH reduces the ketone to the 8R hydroxy group to yield higginsianin B. Higginsianin B is further methylated by the methyltransferase dpmpI to produce the intermediate named FDDP B. The cytochrome P450 monooxygenase dpmpJ then oxidizes the C-26 methyl to primary alcohol, producing the final diterpenoid pyrone with a C-26 primary alcohol on the gamma-pyrone moiety named FDDP C. This is Polyprenyl transferase dpmpC from Macrophomina phaseolina (strain MS6) (Charcoal rot fungus).